Consider the following 458-residue polypeptide: MGRKYFGTDGVRGKVGETPITPEFVMRLGYAAGKVLVSDRGSLPANEHPTVLIGKDTRISGYMLEAALEAGFTAAGVNVLMTGPMPTPAVAYLTRALRLQAGVVISASHNPFEDNGIKFFSASGQKLPDSVEEAIEAALDQPLATVAARQLGRARRIEDAAARYIEFCKSTFPNRLDLRGMRIVVDCAHGATYHVAPHVLHELGAEVVAIGNEPNGFNINEACGATHTPALADAVRAHHADIGISLDGDGDRLMMADAHGRIYDGDQLVYVIARHRLETGYMKGGVVGTLMTNLGTEHALARIHVPFERAKVGDRYVLKRLHANGWFLGGETSGHILCLDKHTTGDGIVSSLQVLRALRETGKTLDAFTADLETYPQVMINVPVVKGFRLSDAAAVTVAVADAESALNGSGRIVLRASGTEPLIRVMVEGRDGDLVRRTAEMIADAVRAAAAASDIAV.

Ser-108 functions as the Phosphoserine intermediate in the catalytic mechanism. Ser-108, Asp-247, Asp-249, and Asp-251 together coordinate Mg(2+). Ser-108 carries the phosphoserine modification.

It belongs to the phosphohexose mutase family. Requires Mg(2+) as cofactor. In terms of processing, activated by phosphorylation.

The catalysed reaction is alpha-D-glucosamine 1-phosphate = D-glucosamine 6-phosphate. In terms of biological role, catalyzes the conversion of glucosamine-6-phosphate to glucosamine-1-phosphate. This is Phosphoglucosamine mutase from Thiobacillus denitrificans (strain ATCC 25259 / T1).